The sequence spans 567 residues: Proline--tRNA ligase (567 aa).

Belongs to the class-II aminoacyl-tRNA synthetase family. ProS type 1 subfamily. In terms of assembly, homodimer.

Its subcellular location is the cytoplasm. It catalyses the reaction tRNA(Pro) + L-proline + ATP = L-prolyl-tRNA(Pro) + AMP + diphosphate. Its function is as follows. Catalyzes the attachment of proline to tRNA(Pro) in a two-step reaction: proline is first activated by ATP to form Pro-AMP and then transferred to the acceptor end of tRNA(Pro). As ProRS can inadvertently accommodate and process non-cognate amino acids such as alanine and cysteine, to avoid such errors it has two additional distinct editing activities against alanine. One activity is designated as 'pretransfer' editing and involves the tRNA(Pro)-independent hydrolysis of activated Ala-AMP. The other activity is designated 'posttransfer' editing and involves deacylation of mischarged Ala-tRNA(Pro). The misacylated Cys-tRNA(Pro) is not edited by ProRS. This is Proline--tRNA ligase from Staphylococcus aureus (strain bovine RF122 / ET3-1).